Reading from the N-terminus, the 1683-residue chain is Phospholipase D1 (1683 aa).

4 disordered regions span residues 1 to 150 (MSNV…AYTQ), 173 to 198 (LKSS…QQVN), 259 to 289 (ILDI…SIPR), and 384 to 416 (VMEK…NITS). The residue at position 2 (serine 2) is an N-acetylserine. Residues serine 8 and serine 30 each carry the phosphoserine modification. Composition is skewed to basic and acidic residues over residues 20–34 (SVTE…RPDE), 63–82 (NGKE…DRNL), and 90–112 (SLDH…ENMH). Residues 116 to 125 (NNLHSSNNNV) show a composition bias toward low complexity. Residues 141 to 150 (RRSSSVAYTQ) show a composition bias toward polar residues. A Phosphoserine modification is found at serine 145. Low complexity predominate over residues 263–279 (TNSNHNHRGNNNNNTGE). Positions 291–487 (SSIISISSNV…EFYELSPLGN (197 aa)) constitute a PX domain. The span at 392–404 (KPSSAASAPHTSE) shows a compositional bias: polar residues. A compositionally biased stretch (low complexity) spans 405 to 416 (NNNNDNGSNITS). The region spanning 496–664 (QGKQGYLVIR…SSIIKMSTST (169 aa)) is the PH domain. 2 consecutive PLD phosphodiesterase domains span residues 791 to 818 (YFWA…CYGR) and 1091 to 1118 (EQLY…NERS). Residues histidine 796, lysine 798, aspartate 803, histidine 1096, lysine 1098, and aspartate 1103 contribute to the active site. Residues 1430 to 1465 (KDMRRHLSSSTESTRNGSNSLPLNEKSNEGESTNVD) form a disordered region. Residues 1437-1451 (SSSTESTRNGSNSLP) are compositionally biased toward polar residues. The residue at position 1461 (serine 1461) is a Phosphoserine. The residue at position 1462 (threonine 1462) is a Phosphothreonine.

Belongs to the phospholipase D family. As to quaternary structure, interacts with SRF1.

The catalysed reaction is a 1,2-diacyl-sn-glycero-3-phosphocholine + H2O = a 1,2-diacyl-sn-glycero-3-phosphate + choline + H(+). Activity is dependent of phosphatidylinositol 4,5-bisphosphate and the regulator SRF1. Inhibited by magnesium. In terms of biological role, required for meiosis and spore formation. Seems to be involved in the coordinate induction of late meiotic events. PLD activity is induced under sporulation conditions and seems to be necessary to complete the meiotic cycle, but not for vegetative cell growth. The chain is Phospholipase D1 (SPO14) from Saccharomyces cerevisiae (strain ATCC 204508 / S288c) (Baker's yeast).